Consider the following 196-residue polypeptide: Imidazoleglycerol-phosphate dehydratase (196 aa).

This sequence belongs to the imidazoleglycerol-phosphate dehydratase family.

The protein resides in the cytoplasm. It carries out the reaction D-erythro-1-(imidazol-4-yl)glycerol 3-phosphate = 3-(imidazol-4-yl)-2-oxopropyl phosphate + H2O. It participates in amino-acid biosynthesis; L-histidine biosynthesis; L-histidine from 5-phospho-alpha-D-ribose 1-diphosphate: step 6/9. This Desulfitobacterium hafniense (strain Y51) protein is Imidazoleglycerol-phosphate dehydratase.